A 1434-amino-acid chain; its full sequence is Probable ATP-dependent RNA helicase spindle-E (1434 aa).

The interval 66–86 (VGGPSNTKRTKTLDELESDDD) is disordered. The 168-residue stretch at 127–294 (MKAIKENPVV…FASCKSMPPV (168 aa)) folds into the Helicase ATP-binding domain. 140-147 (GETGCGKT) is a binding site for ATP. The short motif at 240–243 (DEVH) is the DEAH box element. The region spanning 354-526 (QSEQSYEEAK…SSVLKAKELD (173 aa)) is the Helicase C-terminal domain. The region spanning 938–1001 (ASAITKGLQL…RLMRHELRRD (64 aa)) is the Tudor domain.

The protein belongs to the DEAD box helicase family. DEAH subfamily.

The protein localises to the cytoplasm. The catalysed reaction is ATP + H2O = ADP + phosphate + H(+). Probable ATP-binding RNA helicase which plays a central role during spermatogenesis and oogenesis by repressing transposable elements and preventing their mobilization, which is essential for the germline integrity. Acts via the piRNA metabolic process, which mediates the repression of transposable elements during meiosis by forming complexes composed of piRNAs and Piwi and govern the methylation and subsequent repression of transposons. Involved in the repression of LTR retrotransposon copia. Also involved in telomere regulation by repressing specialized telomeric retroelements HeT-A, TAHRE, and TART; Drosophila telomeres being maintained by transposition of specialized telomeric retroelements. Involved in telomeric trans-silencing, a repression mechanism by which a transposon or a transgene inserted in subtelomeric heterochromatin has the capacity to repress in trans in the female germline, a homologous transposon, or transgene located in euchromatin. Involved in the repression of testis-expressed Stellate genes by the homologous Su(Ste) repeats. Required for anteroposterior and dorsoventral axis formation during oogenesis. The polypeptide is Probable ATP-dependent RNA helicase spindle-E (spn-E) (Drosophila grimshawi (Hawaiian fruit fly)).